The following is a 94-amino-acid chain: Elongation factor 1-beta (94 aa).

Belongs to the EF-1-beta/EF-1-delta family.

Its function is as follows. Promotes the exchange of GDP for GTP in EF-1-alpha/GDP, thus allowing the regeneration of EF-1-alpha/GTP that could then be used to form the ternary complex EF-1-alpha/GTP/AAtRNA. The chain is Elongation factor 1-beta from Ignicoccus hospitalis (strain KIN4/I / DSM 18386 / JCM 14125).